The sequence spans 287 residues: Fructose-1,6-bisphosphatase class 1 (287 aa).

Residues Glu67, Asp86, Leu88, and Asp89 each coordinate Mg(2+). Substrate is bound by residues Asp89 to Ser92, Tyr195, and Lys226. Glu232 contributes to the Mg(2+) binding site.

The protein belongs to the FBPase class 1 family. In terms of assembly, homotetramer. The cofactor is Mg(2+).

It localises to the cytoplasm. It carries out the reaction beta-D-fructose 1,6-bisphosphate + H2O = beta-D-fructose 6-phosphate + phosphate. The protein operates within carbohydrate biosynthesis; gluconeogenesis. This chain is Fructose-1,6-bisphosphatase class 1, found in Campylobacter concisus (strain 13826).